A 357-amino-acid chain; its full sequence is Putative diaminopimelate epimerase, chloroplastic (357 aa).

Residues 1–47 (MSSATAAATATIAAAAAAAAKLAATPAPAPSRRRLTLRGNPTARRCV) constitute a chloroplast transit peptide. Residues Cys-145 and Cys-300 contribute to the active site.

It belongs to the diaminopimelate epimerase family.

The protein localises to the plastid. It is found in the chloroplast. The catalysed reaction is (2S,6S)-2,6-diaminopimelate = meso-2,6-diaminopimelate. Its pathway is amino-acid biosynthesis; L-lysine biosynthesis via DAP pathway; DL-2,6-diaminopimelate from LL-2,6-diaminopimelate: step 1/1. The polypeptide is Putative diaminopimelate epimerase, chloroplastic (DAPF) (Oryza sativa subsp. indica (Rice)).